A 43-amino-acid polypeptide reads, in one-letter code: Lanthionine-containing peptide SapB (43 aa).

An N-terminal signal peptide occupies residues 1–21 (MALLDLQAMDTPAEDSFGELA). 2 cross-links (lanthionine (Ser-Cys)) span residues 24-31 (SQVSLLVC) and 34-41 (SSLSVVLC). A 2,3-didehydroalanine (Ser) mark is found at S27 and S37.

It belongs to the lanthionine-containing morphogen protein family. Post-translationally, maturation involves the enzymatic conversion of Ser into dehydrated AA and the formation of thioether bonds with cysteine. This is followed by membrane translocation and cleavage of the modified precursor.

Lanthionine-containing peptide devoid of antibiotic properties, involved in the formation of aerial mycelium. Suggested to self-assemble at air-water interfaces, thus providing a film of surfactant through which nascent aerial hyphae can emerge. The aerial hyphae differentiate further into spores. This Streptomyces griseus subsp. griseus (strain JCM 4626 / CBS 651.72 / NBRC 13350 / KCC S-0626 / ISP 5235) protein is Lanthionine-containing peptide SapB (ramS).